A 1331-amino-acid chain; its full sequence is Contactin-associated protein-like 2 (1331 aa).

The signal sequence occupies residues 1-27 (MLAAPRAGCGAALLLWIVSSCLCRAWT). At 28 to 1262 (APSTSQKCDE…IRNGVNRNSA (1235 aa)) the chain is on the extracellular side. In terms of domain architecture, F5/8 type C spans 35 to 181 (CDEPLVSGLP…IGLRIEVYGC (147 aa)). Cysteines 35 and 181 form a disulfide. 2 Laminin G-like domains span residues 187–368 (VINF…SFSC) and 373–552 (TVPV…IDMC). N-linked (GlcNAc...) asparagine glycosylation is found at Asn289, Asn346, Asn363, Asn379, Asn436, Asn506, Asn507, and Asn546. Cysteines 336 and 368 form a disulfide. 4 disulfide bridges follow: Cys520–Cys552, Cys558–Cys569, Cys563–Cys578, and Cys580–Cys590. Residues 554–591 (IIDRCVPNHCERGGKCSQTWDSFKCTCDETGYTGATCH) enclose the EGF-like 1 domain. In terms of domain architecture, Fibrinogen C-terminal spans 592–798 (NSIYEPSCEA…LRCQGDRNYW (207 aa)). N-linked (GlcNAc...) asparagine glycosylation is found at Asn630 and Asn735. Residues 799 to 963 (NAASFPNPSS…KVTSGFISGC (165 aa)) enclose the Laminin G-like 3 domain. Cystine bridges form between Cys936/Cys963, Cys967/Cys980, Cys974/Cys989, and Cys991/Cys1001. The region spanning 964–1002 (SGHCTSYGTNCENGGKCLERYHGYSCDCSNTAYDGTFCN) is the EGF-like 2 domain. The Laminin G-like 4 domain occupies 1023–1214 (ATNARDSSSR…IQGELVESNC (192 aa)). N-linked (GlcNAc...) asparagine glycans are attached at residues Asn1116 and Asn1198. Cys1178 and Cys1214 are joined by a disulfide. Residues 1263–1283 (IIGGVIAVVIFTILCTLVFLI) traverse the membrane as a helical segment. The Cytoplasmic portion of the chain corresponds to 1284-1331 (RYMFRHKGTYHTNEAKGAESAESADAAIMNNDPNFTETIDESKKEWLI). Ser1303 and Ser1306 each carry phosphoserine.

Belongs to the neurexin family. As to quaternary structure, interacts (via C-terminus) with KCNA2.

The protein localises to the membrane. It localises to the cell projection. The protein resides in the axon. Its subcellular location is the cell junction. It is found in the paranodal septate junction. Required for gap junction formation. Required, with CNTNAP1, for radial and longitudinal organization of myelinated axons. Plays a role in the formation of functional distinct domains critical for saltatory conduction of nerve impulses in myelinated nerve fibers. Demarcates the juxtaparanodal region of the axo-glial junction. This is Contactin-associated protein-like 2 (CNTNAP2) from Pongo abelii (Sumatran orangutan).